A 327-amino-acid polypeptide reads, in one-letter code: tRNA uridine(34) hydroxylase (327 aa).

A Rhodanese domain is found at 122 to 218 (QENRCLVLDV…YGLKMGTGKW (97 aa)). The active-site Cysteine persulfide intermediate is cysteine 178.

The protein belongs to the TrhO family.

It catalyses the reaction uridine(34) in tRNA + AH2 + O2 = 5-hydroxyuridine(34) in tRNA + A + H2O. Functionally, catalyzes oxygen-dependent 5-hydroxyuridine (ho5U) modification at position 34 in tRNAs. The protein is tRNA uridine(34) hydroxylase of Chlamydia trachomatis serovar A (strain ATCC VR-571B / DSM 19440 / HAR-13).